A 199-amino-acid polypeptide reads, in one-letter code: Ribonuclease HII (199 aa).

The RNase H type-2 domain maps to 11 to 199; the sequence is SRVAGVDEVG…RRSFLRRLLG (189 aa). A divalent metal cation is bound by residues aspartate 17, glutamate 18, and aspartate 113.

The protein belongs to the RNase HII family. Mn(2+) serves as cofactor. The cofactor is Mg(2+).

The protein resides in the cytoplasm. It catalyses the reaction Endonucleolytic cleavage to 5'-phosphomonoester.. Its function is as follows. Endonuclease that specifically degrades the RNA of RNA-DNA hybrids. The chain is Ribonuclease HII from Synechococcus sp. (strain CC9902).